Reading from the N-terminus, the 183-residue chain is Dual-action ribosomal maturation protein DarP (183 aa).

The tract at residues 1–27 is disordered; that stretch reads MSSHSQEPVGEENFDDSEYDRPNKSQV. Over residues 9–18 the composition is skewed to acidic residues; that stretch reads VGEENFDDSE.

It belongs to the DarP family.

The protein localises to the cytoplasm. Member of a network of 50S ribosomal subunit biogenesis factors which assembles along the 30S-50S interface, preventing incorrect 23S rRNA structures from forming. Promotes peptidyl transferase center (PTC) maturation. The chain is Dual-action ribosomal maturation protein DarP from Bordetella pertussis (strain Tohama I / ATCC BAA-589 / NCTC 13251).